The following is a 166-amino-acid chain: Crossover junction endodeoxyribonuclease RuvC (166 aa).

Residues D7, E67, and D139 contribute to the active site. Mg(2+) is bound by residues D7, E67, and D139.

It belongs to the RuvC family. Homodimer which binds Holliday junction (HJ) DNA. The HJ becomes 2-fold symmetrical on binding to RuvC with unstacked arms; it has a different conformation from HJ DNA in complex with RuvA. In the full resolvosome a probable DNA-RuvA(4)-RuvB(12)-RuvC(2) complex forms which resolves the HJ. The cofactor is Mg(2+).

It localises to the cytoplasm. It catalyses the reaction Endonucleolytic cleavage at a junction such as a reciprocal single-stranded crossover between two homologous DNA duplexes (Holliday junction).. Functionally, the RuvA-RuvB-RuvC complex processes Holliday junction (HJ) DNA during genetic recombination and DNA repair. Endonuclease that resolves HJ intermediates. Cleaves cruciform DNA by making single-stranded nicks across the HJ at symmetrical positions within the homologous arms, yielding a 5'-phosphate and a 3'-hydroxyl group; requires a central core of homology in the junction. The consensus cleavage sequence is 5'-(A/T)TT(C/G)-3'. Cleavage occurs on the 3'-side of the TT dinucleotide at the point of strand exchange. HJ branch migration catalyzed by RuvA-RuvB allows RuvC to scan DNA until it finds its consensus sequence, where it cleaves and resolves the cruciform DNA. This is Crossover junction endodeoxyribonuclease RuvC from Paramagnetospirillum magneticum (strain ATCC 700264 / AMB-1) (Magnetospirillum magneticum).